A 466-amino-acid chain; its full sequence is Ribulose bisphosphate carboxylase large chain (466 aa).

N6,N6,N6-trimethyllysine is present on K5. Substrate contacts are provided by N114 and T164. K166 serves as the catalytic Proton acceptor. Residue K168 participates in substrate binding. The Mg(2+) site is built by K192, D194, and E195. Position 192 is an N6-carboxylysine (K192). H285 (proton acceptor) is an active-site residue. Positions 286, 318, and 370 each coordinate substrate.

This sequence belongs to the RuBisCO large chain family. Type I subfamily. Heterohexadecamer of 8 large chains and 8 small chains; disulfide-linked. The disulfide link is formed within the large subunit homodimers. It depends on Mg(2+) as a cofactor. Post-translationally, the disulfide bond which can form in the large chain dimeric partners within the hexadecamer appears to be associated with oxidative stress and protein turnover.

It is found in the plastid. The protein localises to the chloroplast. It carries out the reaction 2 (2R)-3-phosphoglycerate + 2 H(+) = D-ribulose 1,5-bisphosphate + CO2 + H2O. It catalyses the reaction D-ribulose 1,5-bisphosphate + O2 = 2-phosphoglycolate + (2R)-3-phosphoglycerate + 2 H(+). In terms of biological role, ruBisCO catalyzes two reactions: the carboxylation of D-ribulose 1,5-bisphosphate, the primary event in carbon dioxide fixation, as well as the oxidative fragmentation of the pentose substrate in the photorespiration process. Both reactions occur simultaneously and in competition at the same active site. The protein is Ribulose bisphosphate carboxylase large chain of Tropaeolum majus (Common nasturtium).